A 410-amino-acid polypeptide reads, in one-letter code: 3-phosphoshikimate 1-carboxyvinyltransferase (410 aa).

3-phosphoshikimate contacts are provided by Lys-21, Ser-22, and Arg-26. Phosphoenolpyruvate is bound at residue Lys-21. Phosphoenolpyruvate-binding residues include Gly-69 and Arg-97. Residues Ser-143, Ser-144, Gln-145, Ser-171, Asp-288, and Lys-315 each contribute to the 3-phosphoshikimate site. Gln-145 provides a ligand contact to phosphoenolpyruvate. The active-site Proton acceptor is the Asp-288. Residues Arg-319, Arg-364, and Lys-389 each contribute to the phosphoenolpyruvate site.

It belongs to the EPSP synthase family. In terms of assembly, monomer.

It is found in the cytoplasm. It catalyses the reaction 3-phosphoshikimate + phosphoenolpyruvate = 5-O-(1-carboxyvinyl)-3-phosphoshikimate + phosphate. It functions in the pathway metabolic intermediate biosynthesis; chorismate biosynthesis; chorismate from D-erythrose 4-phosphate and phosphoenolpyruvate: step 6/7. Its function is as follows. Catalyzes the transfer of the enolpyruvyl moiety of phosphoenolpyruvate (PEP) to the 5-hydroxyl of shikimate-3-phosphate (S3P) to produce enolpyruvyl shikimate-3-phosphate and inorganic phosphate. This Bacteroides fragilis (strain ATCC 25285 / DSM 2151 / CCUG 4856 / JCM 11019 / LMG 10263 / NCTC 9343 / Onslow / VPI 2553 / EN-2) protein is 3-phosphoshikimate 1-carboxyvinyltransferase.